We begin with the raw amino-acid sequence, 368 residues long: Carbamoyl phosphate synthase small chain (368 aa).

Positions 1-178 are CPSase; sequence MKAVLGLEDG…GAAGAWKGSG (178 aa). The L-glutamine site is built by Ser-45, Gly-230, and Gly-232. The Glutamine amidotransferase type-1 domain maps to 182 to 368; it reads HAVVVDLGIK…KVVKVLGGGL (187 aa). Catalysis depends on Cys-257, which acts as the Nucleophile. L-glutamine is bound by residues Phe-258, Gln-261, Asn-299, Gly-301, and Tyr-302. Residues His-342 and Glu-344 contribute to the active site.

Belongs to the CarA family. As to quaternary structure, composed of two chains; the small (or glutamine) chain promotes the hydrolysis of glutamine to ammonia, which is used by the large (or ammonia) chain to synthesize carbamoyl phosphate. Tetramer of heterodimers (alpha,beta)4.

The enzyme catalyses hydrogencarbonate + L-glutamine + 2 ATP + H2O = carbamoyl phosphate + L-glutamate + 2 ADP + phosphate + 2 H(+). The catalysed reaction is L-glutamine + H2O = L-glutamate + NH4(+). Its pathway is amino-acid biosynthesis; L-arginine biosynthesis; carbamoyl phosphate from bicarbonate: step 1/1. It functions in the pathway pyrimidine metabolism; UMP biosynthesis via de novo pathway; (S)-dihydroorotate from bicarbonate: step 1/3. Small subunit of the glutamine-dependent carbamoyl phosphate synthetase (CPSase). CPSase catalyzes the formation of carbamoyl phosphate from the ammonia moiety of glutamine, carbonate, and phosphate donated by ATP, constituting the first step of 2 biosynthetic pathways, one leading to arginine and/or urea and the other to pyrimidine nucleotides. The small subunit (glutamine amidotransferase) binds and cleaves glutamine to supply the large subunit with the substrate ammonia. This is Carbamoyl phosphate synthase small chain from Methanosarcina mazei (strain ATCC BAA-159 / DSM 3647 / Goe1 / Go1 / JCM 11833 / OCM 88) (Methanosarcina frisia).